The sequence spans 207 residues: N-(5'-phosphoribosyl)anthranilate isomerase (207 aa).

It belongs to the TrpF family.

The catalysed reaction is N-(5-phospho-beta-D-ribosyl)anthranilate = 1-(2-carboxyphenylamino)-1-deoxy-D-ribulose 5-phosphate. Its pathway is amino-acid biosynthesis; L-tryptophan biosynthesis; L-tryptophan from chorismate: step 3/5. The protein is N-(5'-phosphoribosyl)anthranilate isomerase of Geotalea daltonii (strain DSM 22248 / JCM 15807 / FRC-32) (Geobacter daltonii).